The chain runs to 736 residues: 1,4-alpha-glucan branching enzyme GlgB (736 aa).

The active-site Nucleophile is aspartate 415. Glutamate 470 (proton donor) is an active-site residue.

The protein belongs to the glycosyl hydrolase 13 family. GlgB subfamily. Monomer.

It catalyses the reaction Transfers a segment of a (1-&gt;4)-alpha-D-glucan chain to a primary hydroxy group in a similar glucan chain.. The protein operates within glycan biosynthesis; glycogen biosynthesis. Catalyzes the formation of the alpha-1,6-glucosidic linkages in glycogen by scission of a 1,4-alpha-linked oligosaccharide from growing alpha-1,4-glucan chains and the subsequent attachment of the oligosaccharide to the alpha-1,6 position. The polypeptide is 1,4-alpha-glucan branching enzyme GlgB (Burkholderia cenocepacia (strain HI2424)).